Here is a 269-residue protein sequence, read N- to C-terminus: MEDKNSVIVFKNVSFQYQSDASFTLKDVSFSIPKGQWTSIVGHNGSGKSTIAKLMIGIEKVKSGEIFYNNQTITDDNFEKLRKDIGIVFQNPDNQFVGSIVKYDVAFGLENHAVPHDEMHRRVGEALKQVDMLERADYEPNALSGGQKQRVAIASVLALNPSVIILDEATSMLDPDARQNLLDLVRKVKSEHNITIISITHDLSEAMEADHVIVMNKGTVYKEGTAIEIFDHAEELTTIGLDLPFPIKINQMLGYQTSFLTYEGLVDQL.

Positions isoleucine 8–aspartate 242 constitute an ABC transporter domain. Glycine 42 to serine 49 is a binding site for ATP.

The protein belongs to the ABC transporter superfamily. Energy-coupling factor EcfA family. In terms of assembly, forms a stable energy-coupling factor (ECF) transporter complex composed of 2 membrane-embedded substrate-binding proteins (S component), 2 ATP-binding proteins (A component) and 2 transmembrane proteins (T component).

It is found in the cell membrane. In terms of biological role, ATP-binding (A) component of a common energy-coupling factor (ECF) ABC-transporter complex. Unlike classic ABC transporters this ECF transporter provides the energy necessary to transport a number of different substrates. The sequence is that of Energy-coupling factor transporter ATP-binding protein EcfA1 from Staphylococcus aureus (strain MSSA476).